A 211-amino-acid polypeptide reads, in one-letter code: Uracil phosphoribosyltransferase (211 aa).

5-phospho-alpha-D-ribose 1-diphosphate contacts are provided by residues R78, R103, and D130–T138. Residues I195 and G200–A202 contribute to the uracil site. D201 contacts 5-phospho-alpha-D-ribose 1-diphosphate.

The protein belongs to the UPRTase family. Requires Mg(2+) as cofactor.

The catalysed reaction is UMP + diphosphate = 5-phospho-alpha-D-ribose 1-diphosphate + uracil. It participates in pyrimidine metabolism; UMP biosynthesis via salvage pathway; UMP from uracil: step 1/1. With respect to regulation, allosterically activated by GTP. Catalyzes the conversion of uracil and 5-phospho-alpha-D-ribose 1-diphosphate (PRPP) to UMP and diphosphate. The protein is Uracil phosphoribosyltransferase of Kocuria rhizophila (strain ATCC 9341 / DSM 348 / NBRC 103217 / DC2201).